The sequence spans 336 residues: Fructose-1,6-bisphosphatase class 1 (336 aa).

Mg(2+) contacts are provided by Glu-90, Asp-112, Leu-114, and Asp-115. Substrate is bound by residues 115 to 118 (DGSS), Asn-207, and Lys-273. Position 279 (Glu-279) interacts with Mg(2+).

The protein belongs to the FBPase class 1 family. Homotetramer. Requires Mg(2+) as cofactor.

It is found in the cytoplasm. It catalyses the reaction beta-D-fructose 1,6-bisphosphate + H2O = beta-D-fructose 6-phosphate + phosphate. It functions in the pathway carbohydrate biosynthesis; gluconeogenesis. The chain is Fructose-1,6-bisphosphatase class 1 from Xanthomonas euvesicatoria pv. vesicatoria (strain 85-10) (Xanthomonas campestris pv. vesicatoria).